Here is a 73-residue protein sequence, read N- to C-terminus: Large ribosomal subunit protein uL29 (73 aa).

Belongs to the universal ribosomal protein uL29 family.

This chain is Large ribosomal subunit protein uL29, found in Synechococcus sp. (strain JA-2-3B'a(2-13)) (Cyanobacteria bacterium Yellowstone B-Prime).